We begin with the raw amino-acid sequence, 457 residues long: Non-structural protein V (457 aa).

2 disordered regions span residues Lys26–Asp104 and Phe193–Lys403. Composition is skewed to polar residues over residues Tyr28–Ser37 and Asp77–Arg96. Residues Ser240–Asp252 show a composition bias toward acidic residues. A Phosphoserine; by host modification is found at Ser257. Positions Phe296–Lys317 are enriched in basic and acidic residues. Residue Ser350 is modified to Phosphoserine; by host. The Zn(2+) site is built by His406, Cys425, Cys429, Cys441, Cys443, Cys446, Cys450, and Cys453.

This sequence belongs to the paramyxoviruses V protein family. In terms of assembly, interacts with host IFIH1/MDA5, DHX58/LGP2, STAT1 and STAT2.

It is found in the host cytoplasm. Its function is as follows. Plays an essential role in the inhibition of host immune response. Prevents the establishment of cellular antiviral state by blocking interferon-alpha/beta (IFN-alpha/beta) production and signaling pathway. Interacts with host IFIH1/MDA5 and DHX58/LGP2 to inhibit the transduction pathway involved in the activation of IFN-beta promoter, thus protecting the virus against cell antiviral state. Blocks the type I interferon signaling pathway by interacting with host STAT1 and STAT2 and thereby inhibiting their phosphorylation and subsequent nuclear translocation. Efficiently blocks the type II interferon signaling pathway. The polypeptide is Non-structural protein V (P/V/C) (Hendra virus (isolate Horse/Autralia/Hendra/1994)).